We begin with the raw amino-acid sequence, 56 residues long: Small ribosomal subunit protein uS14 (56 aa).

4 residues coordinate Zn(2+): Cys-21, Cys-24, Cys-39, and Cys-42.

The protein belongs to the universal ribosomal protein uS14 family. As to quaternary structure, component of the 40S small ribosomal subunit. Requires Zn(2+) as cofactor.

The protein localises to the cytoplasm. Its subcellular location is the cytosol. It is found in the rough endoplasmic reticulum. The chain is Small ribosomal subunit protein uS14 (RpS29) from Drosophila melanogaster (Fruit fly).